We begin with the raw amino-acid sequence, 93 residues long: Acylphosphatase (93 aa).

C5 and C49 are disulfide-bonded. Residues 5-93 (CIIAWVYGRV…ETLTGFSIRY (89 aa)) form the Acylphosphatase-like domain. Residues R20 and N38 contribute to the active site.

This sequence belongs to the acylphosphatase family.

It catalyses the reaction an acyl phosphate + H2O = a carboxylate + phosphate + H(+). This chain is Acylphosphatase, found in Salmonella typhi.